We begin with the raw amino-acid sequence, 421 residues long: ATP-dependent RNA helicase RhlB (421 aa).

The Q motif signature appears at 9-37; the sequence is QKFSDFALHPKVVEALEKKGFHNCTPIQA. Residues 40–219 form the Helicase ATP-binding domain; sequence LPLTLAGRDV…FEQMNNAEYI (180 aa). 53–60 is an ATP binding site; sequence AQTGTGKT. Positions 165 to 168 match the DEAD box motif; it reads DEAD. Residues 245-390 form the Helicase C-terminal domain; sequence RLLQTLIEEE…VSKYNPDALM (146 aa). The interval 392-421 is disordered; that stretch reads DLPKPLRLTRPRTGNGPRRTGTPRNRRRSG. The span at 402 to 414 shows a compositional bias: low complexity; the sequence is PRTGNGPRRTGTP.

Belongs to the DEAD box helicase family. RhlB subfamily. In terms of assembly, component of the RNA degradosome, which is a multiprotein complex involved in RNA processing and mRNA degradation.

It is found in the cytoplasm. The catalysed reaction is ATP + H2O = ADP + phosphate + H(+). DEAD-box RNA helicase involved in RNA degradation. Has RNA-dependent ATPase activity and unwinds double-stranded RNA. This is ATP-dependent RNA helicase RhlB from Escherichia coli O17:K52:H18 (strain UMN026 / ExPEC).